The following is a 224-amino-acid chain: A-type ATP synthase subunit D (224 aa).

The span at 200-209 shows a compositional bias: basic and acidic residues; sequence KKVKDKKEAQ. The tract at residues 200–224 is disordered; it reads KKVKDKKEAQEEAADEAAAAESTGA. The span at 215 to 224 shows a compositional bias: low complexity; it reads EAAAAESTGA.

The protein belongs to the V-ATPase D subunit family. As to quaternary structure, has multiple subunits with at least A(3), B(3), C, D, E, F, H, I and proteolipid K(x).

It is found in the cell membrane. Its function is as follows. Component of the A-type ATP synthase that produces ATP from ADP in the presence of a proton gradient across the membrane. The chain is A-type ATP synthase subunit D from Halobacterium salinarum (strain ATCC 29341 / DSM 671 / R1).